The primary structure comprises 335 residues: Meiotic expression up-regulated protein 14 (335 aa).

It is found in the cytoplasm. The protein localises to the cytoskeleton. The protein resides in the microtubule organizing center. Its subcellular location is the spindle pole body. It localises to the nucleus membrane. It is found in the prospore membrane. Functionally, has a role in nuclear division during meiosis II where it stabilizes the proper segregation of the spindle pole bodies. Also has a role in the formation and extension of the forespore membrane. The sequence is that of Meiotic expression up-regulated protein 14 (meu14) from Schizosaccharomyces pombe (strain 972 / ATCC 24843) (Fission yeast).